The primary structure comprises 92 residues: Small ribosomal subunit protein uS19 (92 aa).

This sequence belongs to the universal ribosomal protein uS19 family.

Functionally, protein S19 forms a complex with S13 that binds strongly to the 16S ribosomal RNA. This Methylobacterium radiotolerans (strain ATCC 27329 / DSM 1819 / JCM 2831 / NBRC 15690 / NCIMB 10815 / 0-1) protein is Small ribosomal subunit protein uS19.